The sequence spans 162 residues: MNINATARSLLLTEFVSAFFLAMRYFFKPKPTINYPFEKNPISPRFRGEHALRRYPNGEERCIACKLCEAICPAQAITIEAGPRRNDGTRRTVRYDIDMVKCIYCGLCQEACPVDAIVEGPNFEFATETREELYYDKARLLANGDRWEREIAKSIELDAPYR.

2 4Fe-4S ferredoxin-type domains span residues 52–82 and 93–122; these read LRRYPNGEERCIACKLCEAICPAQAITIEAG and VRYDIDMVKCIYCGLCQEACPVDAIVEGPN. Residues Cys-62, Cys-65, Cys-68, Cys-72, Cys-102, Cys-105, Cys-108, and Cys-112 each coordinate [4Fe-4S] cluster.

This sequence belongs to the complex I 23 kDa subunit family. In terms of assembly, NDH-1 is composed of 14 different subunits. Subunits NuoA, H, J, K, L, M, N constitute the membrane sector of the complex. Requires [4Fe-4S] cluster as cofactor.

It localises to the cell inner membrane. The enzyme catalyses a quinone + NADH + 5 H(+)(in) = a quinol + NAD(+) + 4 H(+)(out). In terms of biological role, NDH-1 shuttles electrons from NADH, via FMN and iron-sulfur (Fe-S) centers, to quinones in the respiratory chain. The immediate electron acceptor for the enzyme in this species is believed to be ubiquinone. Couples the redox reaction to proton translocation (for every two electrons transferred, four hydrogen ions are translocated across the cytoplasmic membrane), and thus conserves the redox energy in a proton gradient. This Rhodopseudomonas palustris (strain HaA2) protein is NADH-quinone oxidoreductase subunit I 2.